Here is a 479-residue protein sequence, read N- to C-terminus: ATP-dependent RNA helicase DDX19B (479 aa).

Residue alanine 2 is modified to N-acetylalanine. Residues 2-300 (ATDSWALAVD…DPNVIKLKRE (299 aa)) are N-terminal lobe. The disordered stretch occupies residues 34-54 (TNGAVVKTNANAEKTDEEEKE). An N-terminal helix region spans residues 55 to 68 (DRAAQSLLNKLIRS). The short motif at 92–120 (KSFEELRLKPQLLQGVYAMGFNRPSKIQE) is the Q motif element. ATP-binding positions include glutamine 119 and 138–145 (SQSGTGKT). Residues 125-295 (LMLAEPPQNL…QKVVPDPNVI (171 aa)) enclose the Helicase ATP-binding domain. The DEAD box motif lies at 242–245 (DEAD). Positions 301-479 (EETLDTIKQY…DLDEIEKIAN (179 aa)) are C-terminal lobe. Residues 306 to 474 (TIKQYYVLCS…RLDTDDLDEI (169 aa)) enclose the Helicase C-terminal domain. ATP is bound by residues arginine 429 and arginine 432.

It belongs to the DEAD box helicase family. DDX19/DBP5 subfamily. As to quaternary structure, associates with the nuclear pore complex via interaction with NUP214. Interacts with NUP214 or RNA in a mutually exclusive manner.

It localises to the cytoplasm. It is found in the nucleus. The protein resides in the nucleoplasm. The enzyme catalyses ATP + H2O = ADP + phosphate + H(+). Its function is as follows. ATP-dependent RNA helicase involved in mRNA export from the nucleus. Rather than unwinding RNA duplexes, DDX19B functions as a remodeler of ribonucleoprotein particles, whereby proteins bound to nuclear mRNA are dissociated and replaced by cytoplasmic mRNA binding proteins. The polypeptide is ATP-dependent RNA helicase DDX19B (DDX19B) (Homo sapiens (Human)).